The primary structure comprises 157 residues: S-ribosylhomocysteine lyase 2 (157 aa).

Histidine 54, histidine 58, and cysteine 124 together coordinate Fe cation.

This sequence belongs to the LuxS family. In terms of assembly, homodimer. The cofactor is Fe cation.

It catalyses the reaction S-(5-deoxy-D-ribos-5-yl)-L-homocysteine = (S)-4,5-dihydroxypentane-2,3-dione + L-homocysteine. Involved in the synthesis of autoinducer 2 (AI-2) which is secreted by bacteria and is used to communicate both the cell density and the metabolic potential of the environment. The regulation of gene expression in response to changes in cell density is called quorum sensing. Catalyzes the transformation of S-ribosylhomocysteine (RHC) to homocysteine (HC) and 4,5-dihydroxy-2,3-pentadione (DPD). The sequence is that of S-ribosylhomocysteine lyase 2 from Lactobacillus delbrueckii subsp. bulgaricus (strain ATCC BAA-365 / Lb-18).